The primary structure comprises 869 residues: Alanine--tRNA ligase (869 aa).

Zn(2+) is bound by residues His559, His563, Cys660, and His664.

Belongs to the class-II aminoacyl-tRNA synthetase family. Zn(2+) is required as a cofactor.

The protein localises to the cytoplasm. It carries out the reaction tRNA(Ala) + L-alanine + ATP = L-alanyl-tRNA(Ala) + AMP + diphosphate. Its function is as follows. Catalyzes the attachment of alanine to tRNA(Ala) in a two-step reaction: alanine is first activated by ATP to form Ala-AMP and then transferred to the acceptor end of tRNA(Ala). Also edits incorrectly charged Ser-tRNA(Ala) and Gly-tRNA(Ala) via its editing domain. The protein is Alanine--tRNA ligase of Herminiimonas arsenicoxydans.